Consider the following 468-residue polypeptide: uncharacterized protein (468 aa).

The region spanning M1 to Q69 is the HTH gntR-type domain. K312 carries the post-translational modification N6-(pyridoxal phosphate)lysine.

This sequence in the C-terminal section; belongs to the class-I pyridoxal-phosphate-dependent aminotransferase family.

This is an uncharacterized protein from Escherichia coli (strain K12).